A 93-amino-acid chain; its full sequence is M-zodatoxin-Lt5a (93 aa).

A signal peptide spans 1 to 22 (MKYCVVILALLVALVCITESRS). Residues 23 to 64 (TETGYAVAETLEDNDLDELQAYLEEIAEASEMEDFSNIEEAR) constitute a propeptide that is removed on maturation. The Processing quadruplet motif signature appears at 61–64 (EEAR). Leucine 92 is subject to Leucine amide.

Post-translationally, cleavage of the propeptide depends on the processing quadruplet motif (XXXR, with at least one of X being E). As to expression, expressed by the venom gland.

It localises to the secreted. Has antimicrobial activity against. Gram-positive bacteria (A.globiformis VKM Ac-1112 (MIC=1.1 uM), and B.subtilis VKM B-501 (MIC=0.6 uM)), Gram-negative bacteria (E.coli DH5-alpha (MIC=0.6 uM), E.coli MH1 (MIC=0.6 uM), and P.aeruginosa PAO1 (MIC=18 uM)), and yeasts (P.pastoris GS115 (MIC&gt;37 uM), and S.cerevisiae Y190 (MIC&gt;37 uM)). Also has a moderate hemolytic activity against rabbit erythrocytes. Causes paralysis, but is not lethal when injected into insect (M.domestica) larvae. The protein is M-zodatoxin-Lt5a of Lachesana tarabaevi (Spider).